The primary structure comprises 373 residues: UDP-N-acetylglucosamine--N-acetylmuramyl-(pentapeptide) pyrophosphoryl-undecaprenol N-acetylglucosamine transferase (373 aa).

Residues Thr-14–Gly-16, Asn-128, Arg-165, Ser-199, and Gln-295 contribute to the UDP-N-acetyl-alpha-D-glucosamine site.

Belongs to the glycosyltransferase 28 family. MurG subfamily.

The protein resides in the cell membrane. The catalysed reaction is di-trans,octa-cis-undecaprenyl diphospho-N-acetyl-alpha-D-muramoyl-L-alanyl-D-glutamyl-meso-2,6-diaminopimeloyl-D-alanyl-D-alanine + UDP-N-acetyl-alpha-D-glucosamine = di-trans,octa-cis-undecaprenyl diphospho-[N-acetyl-alpha-D-glucosaminyl-(1-&gt;4)]-N-acetyl-alpha-D-muramoyl-L-alanyl-D-glutamyl-meso-2,6-diaminopimeloyl-D-alanyl-D-alanine + UDP + H(+). The protein operates within cell wall biogenesis; peptidoglycan biosynthesis. Functionally, cell wall formation. Catalyzes the transfer of a GlcNAc subunit on undecaprenyl-pyrophosphoryl-MurNAc-pentapeptide (lipid intermediate I) to form undecaprenyl-pyrophosphoryl-MurNAc-(pentapeptide)GlcNAc (lipid intermediate II). The polypeptide is UDP-N-acetylglucosamine--N-acetylmuramyl-(pentapeptide) pyrophosphoryl-undecaprenol N-acetylglucosamine transferase (Mycobacterium sp. (strain JLS)).